The chain runs to 455 residues: Probable xyloglucan galactosyltransferase GT17 (455 aa).

The Cytoplasmic portion of the chain corresponds to 1–34 (MTFNKRQVKINHWPEKNDKEKQKYSKNRETVKLT). Residues 35-55 (LLTLLLLCSICFLFLTLNFPF) traverse the membrane as a helical; Signal-anchor for type II membrane protein segment. Over 56-455 (TIEFTASIPR…QARDNVVVSL (400 aa)) the chain is Lumenal. 5 N-linked (GlcNAc...) asparagine glycosylation sites follow: N70, N169, N230, N390, and N426.

The protein belongs to the glycosyltransferase 47 family. As to expression, expressed in roots and hypocotyls.

It localises to the golgi apparatus membrane. Functionally, functions in xyloglucan synthesis by adding side chains to the xylosylated glucan backbone. Involved in the galactosylation of hemicellulose xyloglucan. In Arabidopsis thaliana (Mouse-ear cress), this protein is Probable xyloglucan galactosyltransferase GT17.